We begin with the raw amino-acid sequence, 544 residues long: Methionine--tRNA ligase 1 (544 aa).

The 'HIGH' region motif lies at 10 to 20 (PYANGSLHLGH). Zn(2+) contacts are provided by C141, C144, C153, and C156. Positions 329-333 (KLSTS) match the 'KMSKS' region motif. An ATP-binding site is contributed by T332.

It belongs to the class-I aminoacyl-tRNA synthetase family. MetG type 1 subfamily. As to quaternary structure, monomer. It depends on Zn(2+) as a cofactor.

The protein resides in the cytoplasm. The enzyme catalyses tRNA(Met) + L-methionine + ATP = L-methionyl-tRNA(Met) + AMP + diphosphate. Its function is as follows. Is required not only for elongation of protein synthesis but also for the initiation of all mRNA translation through initiator tRNA(fMet) aminoacylation. This is Methionine--tRNA ligase 1 from Bacillus cereus (strain ATCC 10987 / NRS 248).